The following is a 167-amino-acid chain: NADH-quinone oxidoreductase subunit B (167 aa).

[4Fe-4S] cluster-binding residues include Cys40, Cys41, Cys105, and Cys134.

This sequence belongs to the complex I 20 kDa subunit family. As to quaternary structure, NDH-1 is composed of 14 different subunits. Subunits NuoB, C, D, E, F, and G constitute the peripheral sector of the complex. [4Fe-4S] cluster serves as cofactor.

The protein resides in the cell inner membrane. The enzyme catalyses a quinone + NADH + 5 H(+)(in) = a quinol + NAD(+) + 4 H(+)(out). Functionally, NDH-1 shuttles electrons from NADH, via FMN and iron-sulfur (Fe-S) centers, to quinones in the respiratory chain. The immediate electron acceptor for the enzyme in this species is believed to be ubiquinone. Couples the redox reaction to proton translocation (for every two electrons transferred, four hydrogen ions are translocated across the cytoplasmic membrane), and thus conserves the redox energy in a proton gradient. The sequence is that of NADH-quinone oxidoreductase subunit B from Campylobacter jejuni subsp. jejuni serotype O:2 (strain ATCC 700819 / NCTC 11168).